Reading from the N-terminus, the 317-residue chain is Serpentine receptor class delta-44 (317 aa).

Transmembrane regions (helical) follow at residues 5-25 (ILSV…IILI), 90-110 (MFHI…LTTF), 130-150 (ILFI…LVII), 185-205 (RVNG…CLLL), 235-255 (IFGH…SLIT), and 264-284 (FFIF…TMYF).

This sequence belongs to the nematode receptor-like protein srd family.

It localises to the membrane. This is Serpentine receptor class delta-44 (srd-44) from Caenorhabditis elegans.